The chain runs to 429 residues: Lysophosphatidic acid phosphatase type 6 (429 aa).

The N-terminal 32 residues, 1-32 (MISRVFKLRMWAPVGVLTSLTYCLHQRRVALA), are a transit peptide targeting the mitochondrion. Residues 58–169 (RHGARSPLKP…VFIRSTNIYR (112 aa)) form a substrate binding region. His59 (nucleophile) is an active-site residue. The active-site Proton donor is Asp336.

Belongs to the histidine acid phosphatase family. Monomer. In terms of tissue distribution, detected in brain (at protein level).

It is found in the mitochondrion. It carries out the reaction a phosphate monoester + H2O = an alcohol + phosphate. The enzyme catalyses 1-(9Z-octadecenoyl)-sn-glycero-3-phosphate + H2O = 1-(9Z-octadecenoyl)-sn-glycerol + phosphate. Functionally, hydrolyzes lysophosphatidic acid (LPA) containing a medium length fatty acid chain to the corresponding monoacylglycerol. Has highest activity with lysophosphatidic acid containing myristate (C14:0), monounsaturated oleate (C18:1) or palmitate (C16:0), and lower activity with C18:0 and C6:0 lysophosphatidic acid. The sequence is that of Lysophosphatidic acid phosphatase type 6 (ACP6) from Bos taurus (Bovine).